Here is a 492-residue protein sequence, read N- to C-terminus: Putative BTB/POZ domain and WD-repeat protein R786 (492 aa).

The 71-residue stretch at 16 to 86 (TDVEIVLIDE…FYGQIVDSTN (71 aa)) folds into the BTB domain. WD repeat units follow at residues 241-281 (QSSC…IKIK) and 286-325 (LINR…SKGI).

Belongs to the mimivirus BTB/WD family.

This chain is Putative BTB/POZ domain and WD-repeat protein R786, found in Acanthamoeba polyphaga (Amoeba).